The chain runs to 142 residues: Large ribosomal subunit protein uL16 (142 aa).

Belongs to the universal ribosomal protein uL16 family. In terms of assembly, part of the 50S ribosomal subunit.

Functionally, binds 23S rRNA and is also seen to make contacts with the A and possibly P site tRNAs. The chain is Large ribosomal subunit protein uL16 from Phenylobacterium zucineum (strain HLK1).